The following is a 505-amino-acid chain: Maturase K (505 aa).

This sequence belongs to the intron maturase 2 family. MatK subfamily.

The protein localises to the plastid. It is found in the chloroplast. Usually encoded in the trnK tRNA gene intron. Probably assists in splicing its own and other chloroplast group II introns. The sequence is that of Maturase K from Rhizophora stylosa (Bakau).